A 620-amino-acid chain; its full sequence is Cilia- and flagella-associated protein 52 (620 aa).

12 WD repeats span residues 62–106, 109–150, 156–195, 203–242, 288–327, 330–369, 372–411, 415–454, 459–498, 500–539, 543–582, and 585–620; these read GHSN…LMAR, LHKG…AICG, LNVG…RKIW, QMKR…LADT, QLQG…ETLV, CHFE…ELLR, VPNM…LMYV, AHRI…QKLE, EHKS…RNQM, LANT…GIRE, SLSG…VTHV, and GHSG…PFPS.

Belongs to the CFAP52 family. In terms of assembly, microtubule inner protein component of sperm flagellar doublet microtubules. Interacts with BRCA2. Interacts with the CCT chaperonin complex. Interacts with HSP70. Interacts with AK8. Interacts with CFAP45. Interacts with DNAI1. Interacts with IQDC. Expressed in respiratory cells and sperm (at protein level).

The protein resides in the cytoplasm. It localises to the cytoskeleton. The protein localises to the cilium axoneme. It is found in the flagellum axoneme. Its function is as follows. Microtubule inner protein (MIP) part of the dynein-decorated doublet microtubules (DMTs) in cilia axoneme. Important for proper ciliary and flagellar beating. May act in cooperation with CFAP45 and axonemal dynein subunit DNAH11. May play a role in cell growth and/or survival. The protein is Cilia- and flagella-associated protein 52 (CFAP52) of Sus scrofa (Pig).